The chain runs to 346 residues: Heat-inducible transcription repressor HrcA (346 aa).

This sequence belongs to the HrcA family.

Negative regulator of class I heat shock genes (grpE-dnaK-dnaJ and groELS operons). Prevents heat-shock induction of these operons. This chain is Heat-inducible transcription repressor HrcA, found in Erythrobacter litoralis (strain HTCC2594).